Reading from the N-terminus, the 267-residue chain is Thymidylate synthase (267 aa).

DUMP is bound at residue Arg24. His54 contacts (6R)-5,10-methylene-5,6,7,8-tetrahydrofolate. 129-130 (RR) contacts dUMP. Cys149 acts as the Nucleophile in catalysis. Residues 169 to 172 (RSAD), Asn180, and 210 to 212 (HIY) each bind dUMP. Asp172 contacts (6R)-5,10-methylene-5,6,7,8-tetrahydrofolate. A (6R)-5,10-methylene-5,6,7,8-tetrahydrofolate-binding site is contributed by Ala266.

It belongs to the thymidylate synthase family. Bacterial-type ThyA subfamily. As to quaternary structure, homodimer.

Its subcellular location is the cytoplasm. The enzyme catalyses dUMP + (6R)-5,10-methylene-5,6,7,8-tetrahydrofolate = 7,8-dihydrofolate + dTMP. It participates in pyrimidine metabolism; dTTP biosynthesis. Functionally, catalyzes the reductive methylation of 2'-deoxyuridine-5'-monophosphate (dUMP) to 2'-deoxythymidine-5'-monophosphate (dTMP) while utilizing 5,10-methylenetetrahydrofolate (mTHF) as the methyl donor and reductant in the reaction, yielding dihydrofolate (DHF) as a by-product. This enzymatic reaction provides an intracellular de novo source of dTMP, an essential precursor for DNA biosynthesis. The protein is Thymidylate synthase of Arthrobacter sp. (strain FB24).